We begin with the raw amino-acid sequence, 347 residues long: Phosphoribosylformylglycinamidine cyclo-ligase (347 aa).

Belongs to the AIR synthase family.

It is found in the cytoplasm. It carries out the reaction 2-formamido-N(1)-(5-O-phospho-beta-D-ribosyl)acetamidine + ATP = 5-amino-1-(5-phospho-beta-D-ribosyl)imidazole + ADP + phosphate + H(+). The protein operates within purine metabolism; IMP biosynthesis via de novo pathway; 5-amino-1-(5-phospho-D-ribosyl)imidazole from N(2)-formyl-N(1)-(5-phospho-D-ribosyl)glycinamide: step 2/2. This Hydrogenovibrio crunogenus (strain DSM 25203 / XCL-2) (Thiomicrospira crunogena) protein is Phosphoribosylformylglycinamidine cyclo-ligase.